Here is a 434-residue protein sequence, read N- to C-terminus: Trigger factor (434 aa).

The PPIase FKBP-type domain maps to 161–246 (GKRVSIDFVG…VNKVEARELP (86 aa)).

It belongs to the FKBP-type PPIase family. Tig subfamily.

Its subcellular location is the cytoplasm. It catalyses the reaction [protein]-peptidylproline (omega=180) = [protein]-peptidylproline (omega=0). In terms of biological role, involved in protein export. Acts as a chaperone by maintaining the newly synthesized protein in an open conformation. Functions as a peptidyl-prolyl cis-trans isomerase. The chain is Trigger factor from Vibrio parahaemolyticus serotype O3:K6 (strain RIMD 2210633).